A 1360-amino-acid chain; its full sequence is Lysine-specific demethylase REF6 (1360 aa).

Residue Ala2 is modified to N-acetylalanine. In terms of domain architecture, JmjN spans 20 to 61 (APEFRPTLAEFQDPIAYILKIEEEASRYGICKILPPLPPPSK). The 167-residue stretch at 203–369 (ETAWNMRAMS…MAKDAAIRRA (167 aa)) folds into the JmjC domain. His246, Glu248, and His337 together coordinate Fe cation. The interval 652–698 (YGDSSDSEEEDQKGLVTPSSKGETKTYDQEGSDGHEEARDGRTSDFN) is disordered. Residues 673-694 (GETKTYDQEGSDGHEEARDGRT) are compositionally biased toward basic and acidic residues. Residues 944-951 (CRKRKIRA) carry the Nuclear localization signal motif. Disordered regions lie at residues 955–1012 (PRKK…DPHK), 1044–1081 (AASE…SQQT), 1133–1155 (TGKR…QSSR), and 1172–1238 (EELD…NEEE). Polar residues-rich tracts occupy residues 994–1008 (ETGN…NQMS) and 1046–1057 (SESSMENGSQHS). Residues 1136 to 1147 (RQTRSTAKRIAK) show a composition bias toward basic residues. Residues 1225-1238 (EKEEEEEEEENEEE) show a composition bias toward acidic residues. A C2H2-type 1; degenerate zinc finger spans residues 1243-1266 (YQCNMEGCTMSFSSEKQLMLHKRN). The Zn(2+) site is built by Cys1245, Cys1250, His1263, Cys1268, Cys1273, His1280, His1286, His1290, Cys1298, Cys1303, His1316, His1320, Cys1328, Cys1333, His1346, and His1352. 3 consecutive C2H2-type zinc fingers follow at residues 1266-1290 (NICP…QRVH), 1296-1320 (LKCP…IRVH), and 1326-1352 (YVCA…KTGH). The segment at 1275–1348 (KNFFSHKYLV…FVSDFSRHKR (74 aa)) is DNA-binding.

It belongs to the JHDM3 histone demethylase family. In terms of assembly, forms homooligomers. Interacts with BZR2 (via N-terminus). Interacts with BRM in the SWI/SNF complex. Interacts (via N-terminus) with NFYC9. Associates with INO80. In terms of tissue distribution, highly expressed in the shoot apical meristem and primary and secondary root tips, and lower expression in cotyledons, leaves and root axis along vascular tissues. Detected in inflorescences, stems and siliques. Present in seeds.

It is found in the nucleus. The catalysed reaction is N(6),N(6),N(6)-trimethyl-L-lysyl(27)-[histone H3] + 2-oxoglutarate + O2 = N(6),N(6)-dimethyl-L-lysyl(27)-[histone H3] + formaldehyde + succinate + CO2. It catalyses the reaction N(6),N(6)-dimethyl-L-lysyl(27)-[histone H3] + 2-oxoglutarate + O2 = N(6)-methyl-L-lysyl(27)-[histone H3] + formaldehyde + succinate + CO2. Functionally, histone demethylase that demethylates 'Lys-27' (H3K27me) of histone H3, thus acting as a positive regulator of gene expression. Demethylates both tri- (H3K27me3) and di-methylated (H3K27me2) H3K27me. Also demethylates H3K4me3/2 and H3K36me3/2 in an in vitro assay. Involved in the transcriptional regulation of hundreds of genes regulating developmental patterning and responses to various stimuli. Binds DNA via its four zinc fingers in a sequence-specific manner, 5'-CTCTG(C/T)T(C/T)-3' (5'-CTCTGYTY-3'), with a preference for hypo-methylated status (e.g. cytosine methylation), to promote the demethylation of H3K27me3 and recruit the chromatin remodeler BRM in order to activate gene expression. Participates in the regulation of organ boundary formation. Bind mostly motifs located in active chromatin states which are depleted for heterochromatic modifications. Involved in the regulation of flowering time by repressing FLOWERING LOCUS C (FLC) expression. Stimulates lateral roots formation (e.g. primordium initiation and emergence) via the epigenetic de-repression of PIN genes such as PIN1, PIN3 and PIN7 directly by modulating the methylation status of their loci. Interacts with the NF-Y complex to regulate SOC1. Mediates the recruitment of BRM to its target loci. Together with EEN, involved in the epigenetic chromatin-dependent regulatory mechanism that monitors the expression of the essential multifunctional plant stress regulator EIN2 via H3K27me3 repressive histone demethylation and histone variant H2A.Z eviction, thus modulating responses to ethylene (ET), especially during embryogenesis. Eluviates seed dormancy by triggering abscisic acid (ABA) catabolism in seeds via the induction of CYP707A1 and CYP707A3 expression, genes involved in ABA degradation; binds directly to CYP707A1 and CYP707A3 loci to reduce their H3K27me3 levels in developing siliques. Required for systemic acquired resistance (SAR) toward pathogenic bacteria (e.g. Pseudomonas syringae pv tomato DC3000 (avrPto)). Together with FLD and MSI4/FVE, contributes to dehydroabietinal-dependent (DA, a diterpenoid tricyclic diterpene) activation of flowering ans SAR. Binds to the HSFA2 chromatin region to alleviate H3K27me3 repressive marks and trigger its expression in response to heat in a BRM-dependent manner. Involved in the mechanisms necessary for quick response to heat and subsequent heritable transgenerational memory of heat acclimation (global warming) such as early flowering and attenuated immunity; this process includes epigenetic regulation as well as post-transcriptional gene silencing (PTGS). In response to heat, HSFA2 is activated and promotes the expression of REF6 which in turn derepresses HSFA2, thus establishing a heritable feedback loop able to trigger SGIP1 and subsequent SGIP1-mediated SGS3 degradation; this prevents the biosynthesis of trans-acting siRNA (tasiRNA) and leads to the release of HTT5, which drives early flowering but attenuates immunity. In terms of biological role, involved in the maintenance of H3K27me1 histone marks on euchromatin in a PRC2-dependent manner, to maintain low-level basal expression of corresponding genes. Together with ELF6, required for H3K27me3 resetting (especially in constitutive heterochromatin within the pericentromeric regions) and transgenerational inheritance of histone marks, thus acting in safeguarding genome and epigenome integrity during sexual reproduction. The sequence is that of Lysine-specific demethylase REF6 from Arabidopsis thaliana (Mouse-ear cress).